Reading from the N-terminus, the 360-residue chain is DNA replication and repair protein RecF (360 aa).

30–37 (GQNGSGKT) serves as a coordination point for ATP.

It belongs to the RecF family.

The protein resides in the cytoplasm. Functionally, the RecF protein is involved in DNA metabolism; it is required for DNA replication and normal SOS inducibility. RecF binds preferentially to single-stranded, linear DNA. It also seems to bind ATP. The polypeptide is DNA replication and repair protein RecF (Shewanella sp. (strain W3-18-1)).